Here is a 260-residue protein sequence, read N- to C-terminus: (R)-2-hydroxyglutaryl-CoA dehydratase activating ATPase (260 aa).

Residue 12–16 (STASK) participates in ATP binding. Residues C127 and C166 each contribute to the [4Fe-4S] cluster site. Positions 220 and 243 each coordinate ATP.

This sequence belongs to the HgdC family. Homodimer. It depends on [4Fe-4S] cluster as a cofactor. Requires Mg(2+) as cofactor.

The enzyme catalyses ATP + H2O = ADP + phosphate + H(+). It participates in amino-acid degradation; L-glutamate degradation via hydroxyglutarate pathway; crotonoyl-CoA from L-glutamate: step 4/5. Inactivated by exposure to air within less than 15 minutes. Its function is as follows. Involved in the fermentation of L-glutamate via the hydroxyglutarate pathway. HgdC (CompA) has a very low ATPase activity, whose the role is to activate dehydratase HgdA-HgdB complex and then maintain an appropriate redox state via an ATP-dependent electron transfer. The dehydratase requires only catalytic amounts of ATP and substoichiometric amounts of HgdC (CompA) to be functional. The chain is (R)-2-hydroxyglutaryl-CoA dehydratase activating ATPase from Acidaminococcus fermentans (strain ATCC 25085 / DSM 20731 / CCUG 9996 / CIP 106432 / VR4).